The chain runs to 815 residues: Serotype-specific mannosyltransferase WbdA (815 aa).

The interval 1–374 is alpha-(1-&gt;2)-mannosyltransferase; the sequence is MSRAIIENAG…WANTAHLAIE (374 aa). The alpha-(1-&gt;3)-mannosyltransferase stretch occupies residues 431 to 804; sequence KLLVDISVLA…WKQSAEFLLK (374 aa).

The protein belongs to the glycosyltransferase group 1 family. Glycosyltransferase 4 subfamily. As to quaternary structure, monomer. Interacts with the C-terminal region of WbdD.

The protein resides in the cell inner membrane. It catalyses the reaction [alpha-D-Man-(1-&gt;3)-alpha-D-Man-(1-&gt;3)-alpha-D-Man-(1-&gt;2)-alpha-D-Man-(1-&gt;2)](n)-alpha-D-Man-(1-&gt;3)-alpha-D-Man-(1-&gt;3)-alpha-D-Man-(1-&gt;3)-alpha-D-GlcNAc-di-trans,octa-cis-undecaprenyl diphosphate + 2 GDP-alpha-D-mannose = alpha-D-Man-(1-&gt;2)-alpha-D-Man-(1-&gt;2)-[alpha-D-Man-(1-&gt;3)-alpha-D-Man-(1-&gt;3)-alpha-D-Man-(1-&gt;2)-alpha-D-Man-(1-&gt;2)](n)-alpha-D-Man-(1-&gt;3)-alpha-D-Man-(1-&gt;3)-alpha-D-Man-(1-&gt;3)-alpha-D-GlcNAc-di-trans,octa-cis-undecaprenyl diphosphate + 2 GDP + 2 H(+). The enzyme catalyses alpha-D-Man-(1-&gt;2)-alpha-D-Man-(1-&gt;2)-[alpha-D-Man-(1-&gt;3)-alpha-D-Man-(1-&gt;3)-alpha-D-Man-(1-&gt;2)-alpha-D-Man-(1-&gt;2)](n)-alpha-D-Man-(1-&gt;3)-alpha-D-Man-(1-&gt;3)-alpha-D-Man-(1-&gt;3)-alpha-D-GlcNAc-di-trans,octa-cis-undecaprenyl diphosphate + 2 GDP-alpha-D-mannose = [alpha-D-Man-(1-&gt;3)-alpha-D-Man-(1-&gt;3)-alpha-D-Man-(1-&gt;2)-alpha-D-Man-(1-&gt;2)](n+1)-alpha-D-Man-(1-&gt;3)-alpha-D-Man-(1-&gt;3)-alpha-D-Man-(1-&gt;3)-alpha-D-GlcNAc-di-trans,octa-cis-undecaprenyl diphosphate + 2 GDP + 2 H(+). The protein operates within bacterial outer membrane biogenesis; LPS O-antigen biosynthesis. In terms of biological role, mannosyltransferase involved in the biosynthesis of the repeat unit of the lipopolysaccharide (LPS) O-antigen region. Catalyzes the polymerization of a tetrasaccharide repeat unit containing two alpha-(1-&gt;3)- and two alpha-(1-&gt;2)-linked mannopyranose residues. The sequence is that of Serotype-specific mannosyltransferase WbdA from Escherichia coli.